The chain runs to 676 residues: Potassium voltage-gated channel subfamily KQT member 1 (676 aa).

2 disordered regions span residues 1-28 (MAAA…RGSA) and 62-84 (APPA…PRPP). Topologically, residues 1–120 (MAAASSPPRA…YNFLERPTGW (120 aa)) are cytoplasmic. Residue S27 is modified to Phosphoserine; by PKA. Pro residues predominate over residues 62-73 (APPASPAAPAAP). A helical membrane pass occupies residues 121 to 142 (KCFVYHFAVFLIVLVCLIFSVL). Residues 143–153 (STIEQYAALAT) are Extracellular-facing. The chain crosses the membrane as a helical span at residues 154-176 (GTLFWMEIVLVVFFGTEYVVRLW). The Cytoplasmic portion of the chain corresponds to 177–192 (SAGCRSKYVGLWGRLR). Residues 193–218 (FARKPISIIDLIVVVASMVVLCVGSK) form a helical membrane-spanning segment. The Extracellular portion of the chain corresponds to 219-226 (GQVFATSA). The chain crosses the membrane as a helical; Voltage-sensor span at residues 227 to 242 (IRGIRFLQILRMLHVD). Positions 238–246 (MLHVDRQGG) are interaction with KCNE3. The Cytoplasmic segment spans residues 243–260 (RQGGTWRLLGSVVFIHRQ). Q244 contacts a 1,2-diacyl-sn-glycero-3-phospho-(1D-myo-inositol-4,5-bisphosphate). Residues 261-283 (ELITTLYIGFLGLIFSSYFVYLA) traverse the membrane as a helical segment. Residues 284–299 (EKDAVNESGRVEFGSY) are Extracellular-facing. Residue N289 is glycosylated (N-linked (GlcNAc...) asparagine). Residues 300-320 (ADALWWGVVTVTTIGYGDKVP) constitute an intramembrane region (pore-forming). The Extracellular segment spans residues 321–322 (QT). A helical transmembrane segment spans residues 323-348 (WVGKTIASCFSVFAISFFALPAGILG). At 349-676 (SGFALKVQQK…VPRRGPDEGS (328 aa)) the chain is on the cytoplasmic side. The interaction with CALM stretch occupies residues 370–382 (AAASLIQTAWRCY). Phosphoserine is present on residues S407 and S409. The interaction with CALM; calcium-dependent stretch occupies residues 515 to 529 (KVIRRMQYFVAKKKF). The tract at residues 535 to 572 (PYDVRDVIEQYSQGHLNLMVRIKELQRRLDQSIGKPSL) is interaction with KCNE1 C-terminus. Residues 585–621 (SNTIGARLNRVEDKVTQLDQRLALITDMLHQLLSLHG) adopt a coiled-coil conformation. Residues 588 to 616 (IGARLNRVEDKVTQLDQRLALITDMLHQL) form an interaction with AKAP9 region. A C-terminal assembly domain (tetramerization) region spans residues 589-620 (GARLNRVEDKVTQLDQRLALITDMLHQLLSLH). Residues 620 to 676 (HGGSTPGSGGPPREGGAHITQPCGSGGSVDPELFLPSNTLPTYEQLTVPRRGPDEGS) form a disordered region. Over residues 623-632 (STPGSGGPPR) the composition is skewed to gly residues. Polar residues predominate over residues 655-664 (PSNTLPTYEQ).

This sequence belongs to the potassium channel family. KQT (TC 1.A.1.15) subfamily. Kv7.1/KCNQ1 sub-subfamily. As to quaternary structure, tetramer. Heterotetramer with KCNE1; targets to the membrane raft. Interacts (via C-terminus) with calmodulin; forms a heterooctameric structure (with 4:4 KCNQ1:CALM stoichiometry); the interaction is calcium-independent, constitutive, participates in the proper assembly of a functional channel and also acts a calcium sensor. KCNQ1 channels interact more strongly with Ca(2+)-CALM than with apoCALM. Interacts with AKAP9; targets protein kinase A (PKA) catalytic and regulatory subunits and protein phosphatase 1 (PP1) to the KCNQ1-KCNE1 complex, allowing PKA-mediated phosphorylation and increase of delayed rectifier potassium channel activity. Interacts with KCNE2; forms a heterooligomer complex that targets to the membrane raft and leading to currents with an apparently instantaneous activation, a rapid deactivation process and a linear current-voltage relationship and decreases the amplitude of the outward current. Interacts with AP2M1; mediates estrogen-induced internalization via clathrin-coated vesicles. Interacts with NEDD4L; promotes internalization and decreases I(Ks) currents. Interacts with USP2; counteracts the NEDD4L-specific down-regulation of I(Ks) and restore plasma membrane localization. Heterotetramer with KCNQ5; has a voltage-gated potassium channel activity. Interacts with KCNE3; four KCNE3 molecules are bound to one KCNQ1 tetramer (4:4 KCNQ1:KCNE3 stoichiometry); alters membrane raft localization; affects KCNQ1 structure and gating properties. Interacts with KCNE4; impairs KCNQ1 localization in lipid rafts and inhibits voltage-gated potassium channel activity. Interacts with KCNE5; impairs KCNQ1 localization in lipid rafts and only conducts current upon strong and continued depolarization. Interacts with SLC5A3; forms coregulatory channel-transporter complexes that modulate Na(+)-coupled myo-inositol influx through the transporter. Phosphorylation at Ser-27 by PKA; increases delayed rectifier potassium channel activity of the KCNQ1-KCNE1 complex through a macromolecular complex that includes PKA, PP1, and the targeting protein AKAP9. In terms of processing, ubiquitinated by NEDD4L; promotes internalization. The ubiquitinylated form is internalized through a clathrin-mediated endocytosis by interacting with AP2M1 and is recycled back to the cell membrane via RAB4A and RAB11A. Post-translationally, deubiquitinated by USP2; counteracts the NEDD4L-specific down-regulation of I(Ks) and restores the membrane localization. In terms of tissue distribution, abundantly expressed in heart, pancreas, prostate, kidney, small intestine and peripheral blood leukocytes. Less abundant in placenta, lung, spleen, colon, thymus, testis and ovaries.

It is found in the cell membrane. The protein resides in the cytoplasmic vesicle membrane. It localises to the early endosome. The protein localises to the membrane raft. Its subcellular location is the endoplasmic reticulum. It is found in the basolateral cell membrane. The protein resides in the apical cell membrane. The catalysed reaction is K(+)(in) = K(+)(out). With respect to regulation, PIP2 molecule is essential to activate KCNQ channels by inducing the coupling of the voltage-sensing domain (VSD) and the pore-forming domain (PD). Upon channel activation, PIP2 disrupts the VSD-calmodulin/CALM interactions, causing the release of CALM from the VSD which triggers the opening of the gate. Calcium potentiates KCNQ1 channel current through calcium-bound CALM. Calcium-bound CALM competes with PIP2 to stabilize the channel open state. Its function is as follows. Pore-forming subunit of the voltage-gated potassium (Kv) channel involved in the regulation of cardiomyocyte excitability and important in normal development and functions of myocardium, inner ear, stomach and colon. Associates with KCNE beta subunits that modulates current kinetics. Induces a voltage-dependent current by rapidly activating and slowly deactivating potassium-selective outward current. Also promotes a delayed voltage activated potassium current showing outward rectification characteristic. During beta-adrenergic receptor stimulation, participates in cardiac repolarization by associating with KCNE1 to form the I(Ks) cardiac potassium current that increases the amplitude and slows down the activation kinetics of outward potassium current I(Ks). Muscarinic agonist oxotremorine-M strongly suppresses KCNQ1/KCNE1 current. When associated with KCNE3, forms the potassium channel that is important for cyclic AMP-stimulated intestinal secretion of chloride ions. This interaction with KCNE3 is reduced by 17beta-estradiol, resulting in the reduction of currents. During conditions of increased substrate load, maintains the driving force for proximal tubular and intestinal sodium ions absorption, gastric acid secretion, and cAMP-induced jejunal chloride ions secretion. Allows the provision of potassium ions to the luminal membrane of the secretory canaliculus in the resting state as well as during stimulated acid secretion. When associated with KCNE2, forms a heterooligomer complex leading to currents with an apparently instantaneous activation, a rapid deactivation process and a linear current-voltage relationship and decreases the amplitude of the outward current. When associated with KCNE4, inhibits voltage-gated potassium channel activity. When associated with KCNE5, this complex only conducts current upon strong and continued depolarization. Also forms a heterotetramer with KCNQ5; has a voltage-gated potassium channel activity. Binds with phosphatidylinositol 4,5-bisphosphate. KCNQ1-KCNE2 channel associates with Na(+)-coupled myo-inositol symporter in the apical membrane of choroid plexus epithelium and regulates the myo-inositol gradient between blood and cerebrospinal fluid with an impact on neuron excitability. Non-functional alone but modulatory when coexpressed with the full-length isoform 1. The sequence is that of Potassium voltage-gated channel subfamily KQT member 1 from Homo sapiens (Human).